The chain runs to 197 residues: Small ribosomal subunit protein uS2 (197 aa).

The protein belongs to the universal ribosomal protein uS2 family.

This Archaeoglobus fulgidus (strain ATCC 49558 / DSM 4304 / JCM 9628 / NBRC 100126 / VC-16) protein is Small ribosomal subunit protein uS2 (rps2).